A 161-amino-acid chain; its full sequence is MRIAIYPGSFDPVTYAHLDIARRATRIFDRVIMAVFDRPQKRLLFSTEERLHLLRTATADLDHVEAMSYNTLTVEFARQVGACAIVRGLRAGSDFEAEFQMAQVNQTIDPGIEVVVLMAGRPFAHISSTAVREMASLGRDPVEFTPPVVVAALREKFAQRG.

Serine 9 provides a ligand contact to substrate. ATP contacts are provided by residues serine 9–phenylalanine 10 and histidine 17. The substrate site is built by lysine 41, threonine 73, and arginine 87. ATP is bound by residues glycine 88–arginine 90, glutamate 98, and phenylalanine 123–threonine 129.

The protein belongs to the bacterial CoaD family. In terms of assembly, homohexamer. Mg(2+) is required as a cofactor.

It is found in the cytoplasm. The catalysed reaction is (R)-4'-phosphopantetheine + ATP + H(+) = 3'-dephospho-CoA + diphosphate. It functions in the pathway cofactor biosynthesis; coenzyme A biosynthesis; CoA from (R)-pantothenate: step 4/5. Functionally, reversibly transfers an adenylyl group from ATP to 4'-phosphopantetheine, yielding dephospho-CoA (dPCoA) and pyrophosphate. This chain is Phosphopantetheine adenylyltransferase, found in Chloroflexus aggregans (strain MD-66 / DSM 9485).